Consider the following 503-residue polypeptide: Lysine--tRNA ligase (503 aa).

Positions 414 and 421 each coordinate Mg(2+).

It belongs to the class-II aminoacyl-tRNA synthetase family. As to quaternary structure, homodimer. Mg(2+) is required as a cofactor.

It is found in the cytoplasm. The enzyme catalyses tRNA(Lys) + L-lysine + ATP = L-lysyl-tRNA(Lys) + AMP + diphosphate. The polypeptide is Lysine--tRNA ligase (Neisseria gonorrhoeae (strain NCCP11945)).